The primary structure comprises 86 residues: Neurotoxin E1x (86 aa).

Positions 1–19 are cleaved as a signal peptide; the sequence is MNSLLMITACLVVIGTVWA. Positions 20–84 constitute an LCN-type CS-alpha/beta domain; it reads KEGYLVDVKG…TWPLPNKTCG (65 aa). 4 disulfides stabilise this stretch: Cys30-Cys83, Cys34-Cys59, Cys43-Cys64, and Cys47-Cys66. The residue at position 83 (Cys83) is a Cysteine amide.

It belongs to the long (4 C-C) scorpion toxin superfamily. Sodium channel inhibitor family. Beta subfamily. In terms of tissue distribution, expressed by the venom gland.

Its subcellular location is the secreted. Its function is as follows. Binds to sodium channels (Nav) and inhibits the inactivation of the activated channels, thereby blocking neuronal transmission. In Centruroides sculpturatus (Arizona bark scorpion), this protein is Neurotoxin E1x.